A 451-amino-acid chain; its full sequence is Tubulin gamma-2 chain (451 aa).

Ser-131 bears the Phosphoserine; by BRSK1 mark. Position 142–148 (142–148 (AGGTGSG)) interacts with GTP.

The protein belongs to the tubulin family. In terms of assembly, component of the gamma-tubulin ring complex (gTuRC) consisting of TUBGCP2, TUBGCP3, TUBGCP4, TUBGCP5 and TUBGCP6 and gamma-tubulin TUBG1 or TUBG2. TUBGCP2, TUBGCP3, TUBGCP4, TUBGCP5 and TUBGCP6 assemble in a 5:5:2:1:1 stoichiometry; each is associated with a gamma-tubulin, thereby arranging 14 gamma-tubulins in a helical manner. Gamma-tubulin at the first position is blocked by TUBGCP3 at the last position, allowing 13 protafilaments to grow into a microtubule. Interacts with alpha-beta tubulin heterodimers; the interaction allows microtubules to nucleate from the gTuRC. Post-translationally, phosphorylation at Ser-131 by BRSK1 regulates centrosome duplication, possibly by mediating relocation of gamma-tubulin and its associated proteins from the cytoplasm to the centrosome.

It localises to the cytoplasm. The protein localises to the cytoskeleton. Its subcellular location is the microtubule organizing center. The protein resides in the centrosome. Tubulin is the major constituent of microtubules, protein filaments consisting of alpha- and beta-tubulin heterodimers. Gamma-tubulin is a key component of the gamma-tubulin ring complex (gTuRC) which mediates microtubule nucleation. The gTuRC regulates the minus-end nucleation of alpha-beta tubulin heterodimers that grow into microtubule protafilaments, a critical step in centrosome duplication and spindle formation. The protein is Tubulin gamma-2 chain (TUBG2) of Homo sapiens (Human).